Reading from the N-terminus, the 635-residue chain is Probable clathrin assembly protein At4g32285 (635 aa).

The 137-residue stretch at 23–159 folds into the ENTH domain; it reads VASNMAPDLE…ELALFERRGR (137 aa). The interval 157–208 is disordered; sequence RGRNGGGSSSSHQSNGDDGYNRSRDDFRSPPPRTYDYETGNGFGMPKRSRSF. Residues 165–174 are compositionally biased toward low complexity; that stretch reads SSSHQSNGDD. A compositionally biased stretch (basic and acidic residues) spans 175–184; it reads GYNRSRDDFR. Residue Ser-207 is modified to Phosphoserine. At Thr-224 the chain carries Phosphothreonine. Positions 357-369 are enriched in basic and acidic residues; the sequence is AKRAKSPERKEIE. Residues 357–412 are disordered; sequence AKRAKSPERKEIEAPPAPAPPVEEPVDMNEIKALPPPENHTPPPPPAPEPKPQQPQ. Pro residues predominate over residues 390 to 409; sequence LPPPENHTPPPPPAPEPKPQ.

Its subcellular location is the membrane. The protein localises to the clathrin-coated pit. It localises to the golgi apparatus. It is found in the cytoplasmic vesicle. The protein resides in the clathrin-coated vesicle. This is Probable clathrin assembly protein At4g32285 from Arabidopsis thaliana (Mouse-ear cress).